The sequence spans 502 residues: UDP-N-acetylmuramate--L-alanine ligase (502 aa).

119–125 (GSHGKST) is an ATP binding site.

Belongs to the MurCDEF family.

The protein resides in the cytoplasm. It carries out the reaction UDP-N-acetyl-alpha-D-muramate + L-alanine + ATP = UDP-N-acetyl-alpha-D-muramoyl-L-alanine + ADP + phosphate + H(+). It functions in the pathway cell wall biogenesis; peptidoglycan biosynthesis. Its function is as follows. Cell wall formation. This Frankia casuarinae (strain DSM 45818 / CECT 9043 / HFP020203 / CcI3) protein is UDP-N-acetylmuramate--L-alanine ligase.